We begin with the raw amino-acid sequence, 249 residues long: DNA repair protein RecO (249 aa).

Belongs to the RecO family.

Its function is as follows. Involved in DNA repair and RecF pathway recombination. The protein is DNA repair protein RecO of Mycoplasma mycoides subsp. mycoides SC (strain CCUG 32753 / NCTC 10114 / PG1).